We begin with the raw amino-acid sequence, 229 residues long: Large ribosomal subunit protein uL1 (229 aa).

The protein belongs to the universal ribosomal protein uL1 family. In terms of assembly, part of the 50S ribosomal subunit.

Its function is as follows. Binds directly to 23S rRNA. The L1 stalk is quite mobile in the ribosome, and is involved in E site tRNA release. In terms of biological role, protein L1 is also a translational repressor protein, it controls the translation of the L11 operon by binding to its mRNA. In Lactococcus lactis subsp. cremoris (strain MG1363), this protein is Large ribosomal subunit protein uL1.